Consider the following 354-residue polypeptide: Chorismate synthase (354 aa).

R46 contacts NADP(+). FMN is bound by residues R123 to S125, N239 to A240, G284, K299 to T303, and R325.

Belongs to the chorismate synthase family. In terms of assembly, homotetramer. The cofactor is FMNH2.

The catalysed reaction is 5-O-(1-carboxyvinyl)-3-phosphoshikimate = chorismate + phosphate. The protein operates within metabolic intermediate biosynthesis; chorismate biosynthesis; chorismate from D-erythrose 4-phosphate and phosphoenolpyruvate: step 7/7. Its function is as follows. Catalyzes the anti-1,4-elimination of the C-3 phosphate and the C-6 proR hydrogen from 5-enolpyruvylshikimate-3-phosphate (EPSP) to yield chorismate, which is the branch point compound that serves as the starting substrate for the three terminal pathways of aromatic amino acid biosynthesis. This reaction introduces a second double bond into the aromatic ring system. The sequence is that of Chorismate synthase from Azobacteroides pseudotrichonymphae genomovar. CFP2.